Consider the following 704-residue polypeptide: MASAAFKETDMAGALSPVSSQTTNSSSLKGLSTLSSKVTSVLSTSYADSEFRDALSLLDSRGIQNTAEARRRLRLDLHREVIDSNGEIIDEFGRVADQLRRIGNTLEKLNNSYAEMKTQVTKAHECTSPVLQEASTLIAQKRQVEIKQRLLKSFSGHFLLPEDEVAILTLTSEPVDDRFFNVLAKARRIRKDCEILLGFENQTSGLQIMEQTSRNLDLAFQKLYRWIQREFKTLNLESPQLGSAIRRALRALAERPSLFQNCLDFFAEARENVLSDAFFTALTGTTSGGTVDHSVKPIEMAAHDPLRYVGDMLAWSHSATVSEREALEVLFVSDGDAIAKGIRSGRDTEVWRLVAEDGEEAPEFDPIKALNELVDRNVSGAARLLRQRVEQVIQTNEETILAYKLANLLGFYRVMFAKLLTEESILVECIRNLEAEALRQFRSLMRDYIANLQGEFQHVPPTLEPPDFLVPSLQQLDAIMKTYETSLTASGDREADFQPILAEALDPFIAGCRNIGKALAPPKDSVFLINCLMAIKRVLMPFDFAKGRVEELGEEIGRESSKLSESQYLFFREASGLAEVFDAVQSLTDKPEDVERVRTLAPLAPAALVHASQRLDDFLPSALLDALENIKYLQDSTMARKITEEAAEKFCLNFEHVEYILMYADESAGQTPQAERSSEDDYGGPQLLRTLFPRTTEEIRVLLS.

It belongs to the COG6 family.

It is found in the golgi apparatus membrane. Its function is as follows. Acts as a component of the peripheral membrane COG complex that is involved in intra-Golgi protein trafficking. COG is located at the cis-Golgi, and regulates tethering of retrograde intra-Golgi vesicles and possibly a number of other membrane trafficking events. This is Conserved oligomeric Golgi complex subunit 6 (COG6) from Pyricularia oryzae (strain 70-15 / ATCC MYA-4617 / FGSC 8958) (Rice blast fungus).